Reading from the N-terminus, the 435-residue chain is tRNA(Ile)-lysidine synthase (435 aa).

25–30 (SGGLDS) provides a ligand contact to ATP.

Belongs to the tRNA(Ile)-lysidine synthase family.

It is found in the cytoplasm. It carries out the reaction cytidine(34) in tRNA(Ile2) + L-lysine + ATP = lysidine(34) in tRNA(Ile2) + AMP + diphosphate + H(+). In terms of biological role, ligates lysine onto the cytidine present at position 34 of the AUA codon-specific tRNA(Ile) that contains the anticodon CAU, in an ATP-dependent manner. Cytidine is converted to lysidine, thus changing the amino acid specificity of the tRNA from methionine to isoleucine. The chain is tRNA(Ile)-lysidine synthase from Photobacterium profundum (strain SS9).